The following is a 462-amino-acid chain: MIPVIALVGRPNVGKSTLFNRITKTQDALVADFPGLTRDRQYGHAQHENKSFIIVDTGGIGVDDIEVDTLMSRQSQVALNEANVILFLVDGRSGLTGIDQQIAQALRKLNKKVHLVVNKTDGMNEDIACADFQSLGITDVHAISASHGGGISSLLEEILEPFTTETHEATDDKAIKIAFAGRPNVGKSTLINRILGEERVVVYDMPGTTRDSISIPFTREDKQYVLIDTAGVRRKSRIDEKIEKFSVIKTLQAIKEAHVCLLLLDANEGITDQDMNLLGFIIESGKALVIAVNKWDGLEEDHKEKIKSELSRRLHFANFAKIRFISALHGSGVGGLFKDINEAYHSAIQSFSTPKLTRLLQDISAKHTPPCINGRRIKLRYAHLGGHNPPVIVIHGNQLDALPESYKRYLNNEFIKHLGLVGTPLKIEFKGGQNPFANKKNKLSQRQVNKKKRLMRWAKSKK.

2 EngA-type G domains span residues 3-166 (PVIA…TTET) and 175-348 (IKIA…HSAI). GTP-binding positions include 9-16 (GRPNVGKS), 56-60 (DTGGI), 118-121 (NKTD), 181-188 (GRPNVGKS), 228-232 (DTAGV), and 293-296 (NKWD). One can recognise a KH-like domain in the interval 349-433 (QSFSTPKLTR…PLKIEFKGGQ (85 aa)).

Belongs to the TRAFAC class TrmE-Era-EngA-EngB-Septin-like GTPase superfamily. EngA (Der) GTPase family. In terms of assembly, associates with the 50S ribosomal subunit.

Functionally, GTPase that plays an essential role in the late steps of ribosome biogenesis. In Legionella pneumophila (strain Paris), this protein is GTPase Der.